We begin with the raw amino-acid sequence, 212 residues long: MQVLHIDSSITGAASVSRQLTAQTVAALVAANPGAKVEYLDLAVNAPDHLNAVSMGFRTGQAATTEAERAQNAISEALVSQFLAADVVVVGAPFYNFTISSQLKAWIDRIAQGGRTFRYTAAGPEGLAKGKKVIVASTRGGVYSTSEMGQALEHQESYLKTVFGFLGITDVSIVRAEGVAMGDESKAKALESARSDIVRAAAAANQEAAIAA.

Residues Ser-9, 15–17 (SVS), and 138–141 (TRGG) contribute to the FMN site.

This sequence belongs to the azoreductase type 1 family. In terms of assembly, homodimer. The cofactor is FMN.

It catalyses the reaction 2 a quinone + NADH + H(+) = 2 a 1,4-benzosemiquinone + NAD(+). The catalysed reaction is N,N-dimethyl-1,4-phenylenediamine + anthranilate + 2 NAD(+) = 2-(4-dimethylaminophenyl)diazenylbenzoate + 2 NADH + 2 H(+). Quinone reductase that provides resistance to thiol-specific stress caused by electrophilic quinones. Functionally, also exhibits azoreductase activity. Catalyzes the reductive cleavage of the azo bond in aromatic azo compounds to the corresponding amines. This chain is FMN-dependent NADH:quinone oxidoreductase, found in Delftia acidovorans (strain DSM 14801 / SPH-1).